The chain runs to 631 residues: Chaperone protein DnaK (631 aa).

T198 carries the post-translational modification Phosphothreonine; by autocatalysis. A disordered region spans residues 602–631 (EAAGGAQQAGKDDVVDAEFTEVDDDKKKSA).

Belongs to the heat shock protein 70 family.

Its function is as follows. Acts as a chaperone. This Rhodopseudomonas palustris (strain ATCC BAA-98 / CGA009) protein is Chaperone protein DnaK.